Reading from the N-terminus, the 252-residue chain is Pyrroloquinoline-quinone synthase (252 aa).

This sequence belongs to the PqqC family.

The catalysed reaction is 6-(2-amino-2-carboxyethyl)-7,8-dioxo-1,2,3,4,7,8-hexahydroquinoline-2,4-dicarboxylate + 3 O2 = pyrroloquinoline quinone + 2 H2O2 + 2 H2O + H(+). Its pathway is cofactor biosynthesis; pyrroloquinoline quinone biosynthesis. Its function is as follows. Ring cyclization and eight-electron oxidation of 3a-(2-amino-2-carboxyethyl)-4,5-dioxo-4,5,6,7,8,9-hexahydroquinoline-7,9-dicarboxylic-acid to PQQ. The polypeptide is Pyrroloquinoline-quinone synthase (Acinetobacter baumannii (strain ACICU)).